We begin with the raw amino-acid sequence, 213 residues long: Orotate phosphoribosyltransferase (213 aa).

Lys26 is a binding site for 5-phospho-alpha-D-ribose 1-diphosphate. 34-35 contributes to the orotate binding site; that stretch reads FF. 5-phospho-alpha-D-ribose 1-diphosphate contacts are provided by residues 72–73, Arg99, Lys100, Lys103, His105, and 124–132; these read YK and DDVITAGTA. Positions 128 and 156 each coordinate orotate.

It belongs to the purine/pyrimidine phosphoribosyltransferase family. PyrE subfamily. In terms of assembly, homodimer. It depends on Mg(2+) as a cofactor.

It catalyses the reaction orotidine 5'-phosphate + diphosphate = orotate + 5-phospho-alpha-D-ribose 1-diphosphate. The protein operates within pyrimidine metabolism; UMP biosynthesis via de novo pathway; UMP from orotate: step 1/2. Functionally, catalyzes the transfer of a ribosyl phosphate group from 5-phosphoribose 1-diphosphate to orotate, leading to the formation of orotidine monophosphate (OMP). This chain is Orotate phosphoribosyltransferase, found in Escherichia coli O157:H7.